A 300-amino-acid chain; its full sequence is Estradiol 17-beta-dehydrogenase 11 (300 aa).

Positions 1–19 are cleaved as a signal peptide; sequence MKFLLDVLLLLPLLIVCSL. Residue 40–64 participates in NADP(+) binding; it reads LITGAGHGIGRLTAYEFAKLKSKLV. Ser-172 is a substrate binding site. The Proton acceptor role is filled by Tyr-185.

It belongs to the short-chain dehydrogenases/reductases (SDR) family. 17-beta-HSD 3 subfamily.

The protein localises to the endoplasmic reticulum. It localises to the lipid droplet. The catalysed reaction is 17beta-estradiol + NAD(+) = estrone + NADH + H(+). The enzyme catalyses 17beta-estradiol + NADP(+) = estrone + NADPH + H(+). Its function is as follows. Can convert androstan-3-alpha,17-beta-diol (3-alpha-diol) to androsterone in vitro, suggesting that it may participate in androgen metabolism during steroidogenesis. May act by metabolizing compounds that stimulate steroid synthesis and/or by generating metabolites that inhibit it. Has no activity toward DHEA (dehydroepiandrosterone), or A-dione (4-androste-3,17-dione), and only a slight activity toward testosterone to A-dione. In Pongo abelii (Sumatran orangutan), this protein is Estradiol 17-beta-dehydrogenase 11 (HSD17B11).